The primary structure comprises 401 residues: Alpha-(1,4)-fucosyltransferase (401 aa).

The Cytoplasmic portion of the chain corresponds to 1–4 (MPMR). The chain crosses the membrane as a helical; Signal-anchor for type II membrane protein span at residues 5–27 (YLNAMAALLMMFFTLLILSFTGI). Residues 28-401 (LEFPSASTSM…SRRGGKNAGV (374 aa)) are Lumenal-facing. Asn-85 carries an N-linked (GlcNAc...) asparagine glycan.

This sequence belongs to the glycosyltransferase 10 family. As to expression, present in root, stem, flower buds and green siliques.

Its subcellular location is the golgi apparatus. It is found in the golgi stack membrane. It participates in protein modification; protein glycosylation. Its function is as follows. May be involved in cell wall synthesis. Catalyzes alpha-1,4 glycosidic linkages and generates Lewis-a epitopes. The polypeptide is Alpha-(1,4)-fucosyltransferase (FUT13) (Arabidopsis thaliana (Mouse-ear cress)).